The sequence spans 330 residues: Catharanthine synthase (330 aa).

The Involved in the stabilization of the negatively charged intermediate by the formation of the oxyanion hole signature appears at 81 to 83; it reads HGA. Glycine 84 contributes to the catharanthine binding site. Serine 173 functions as the Proton acceptor in the catalytic mechanism. The active site involves aspartate 274. Tyrosine 305 lines the catharanthine pocket. The active-site Proton donor/acceptor is tyrosine 305.

This sequence belongs to the 'GDXG' lipolytic enzyme family. Interacts with dehydroprecondylocarpine acetate synthase (DPAS). In terms of tissue distribution, expressed in leaf epidermis.

It is found in the cytoplasm. The protein localises to the cytosol. The protein resides in the nucleus. It catalyses the reaction dehydrosecodine = catharanthine. It participates in alkaloid biosynthesis. Functionally, component of iboga and aspidosperma monoterpenoid indole alkaloids (MIAs, e.g. tabersonine and catharanthine) biosynthesis pathway from 19E-geissoschizine, psychoactive compounds likely to be used in the treatment of opioid dependence. Catalyzes the conversion of dehydrosecodine to catharanthine. This is Catharanthine synthase from Catharanthus roseus (Madagascar periwinkle).